The chain runs to 287 residues: mRNA-capping enzyme regulatory subunit OPG124 (287 aa).

Belongs to the orthopoxvirus mRNA-capping enzyme regulatory subunit family. In terms of assembly, interacts with the catalytic subunit OPG113.

It is found in the virion. In terms of biological role, regulatory subunit of the mRNA cap enzyme which stabilizes the catalytic subunit and enhances its methyltransferase activity through an allosteric mechanism. Heterodimeric mRNA capping enzyme catalyzes the linkage of a N7-methyl-guanosine moiety to the first transcribed nucleotide (cap 0 structure), whereas the methyltransferase OPG102 is responsible for a second methylation at the 2'-O position of the ribose (cap 1 structure). Also involved in early viral gene transcription termination and intermediate viral gene transcription initiation. Early gene transcription termination requires the termination factor VTF, the DNA-dependent ATPase NPH-I/OPG123 and the RAP94/OPG109 subunit of the viral RNA polymerase, as well as the presence of a specific termination motif. Binds, together with RAP94/OPG109, to the termination motif 5'-UUUUUNU-3' in the nascent early mRNA. This chain is mRNA-capping enzyme regulatory subunit OPG124 (OPG124), found in Vaccinia virus (strain Copenhagen) (VACV).